Consider the following 89-residue polypeptide: Ragulator complex protein LAMTOR5 homolog (89 aa).

The protein belongs to the LAMTOR5 family. As to quaternary structure, part of the Ragulator complex.

The protein localises to the cytoplasm. It is found in the lysosome. Its function is as follows. Regulator of the TOR pathway, a signaling cascade that promotes cell growth in response to growth factors, energy levels, and amino acids. As part of the Ragulator complex, may activate the TOR signaling cascade in response to amino acids. This is Ragulator complex protein LAMTOR5 homolog from Dictyostelium discoideum (Social amoeba).